The primary structure comprises 556 residues: Putative cysteine ligase BshC (556 aa).

Coiled coils occupy residues 408 to 442 (ILQKHELTLDDAFHRLDDLRQELLEREDRLGIAQA) and 468 to 513 (LGQV…ANLT).

The protein belongs to the BshC family.

Its function is as follows. Involved in bacillithiol (BSH) biosynthesis. May catalyze the last step of the pathway, the addition of cysteine to glucosamine malate (GlcN-Mal) to generate BSH. This chain is Putative cysteine ligase BshC, found in Symbiobacterium thermophilum (strain DSM 24528 / JCM 14929 / IAM 14863 / T).